The following is a 198-amino-acid chain: Probable septum site-determining protein MinC (198 aa).

The protein belongs to the MinC family. As to quaternary structure, interacts with MinD and FtsZ.

Cell division inhibitor that blocks the formation of polar Z ring septums. Rapidly oscillates between the poles of the cell to destabilize FtsZ filaments that have formed before they mature into polar Z rings. Prevents FtsZ polymerization. The protein is Probable septum site-determining protein MinC of Thermosipho melanesiensis (strain DSM 12029 / CIP 104789 / BI429).